A 233-amino-acid chain; its full sequence is Large ribosomal subunit protein uL1 (233 aa).

This sequence belongs to the universal ribosomal protein uL1 family. As to quaternary structure, part of the 50S ribosomal subunit.

Its function is as follows. Binds directly to 23S rRNA. The L1 stalk is quite mobile in the ribosome, and is involved in E site tRNA release. Protein L1 is also a translational repressor protein, it controls the translation of the L11 operon by binding to its mRNA. This is Large ribosomal subunit protein uL1 from Rhodospirillum rubrum (strain ATCC 11170 / ATH 1.1.1 / DSM 467 / LMG 4362 / NCIMB 8255 / S1).